A 415-amino-acid chain; its full sequence is Probable cytosolic iron-sulfur protein assembly protein 1 (415 aa).

The WD 1 repeat unit spans residues 9–48 (AHDDKVWSLSSHPTLPLLATASTDKCSNIYRLSCSNASSS). The disordered stretch occupies residues 45–70 (ASSSSSSSSPPSPPSPPSSSSPRRNF). Pro residues predominate over residues 54–63 (PPSPPSPPSS). WD repeat units follow at residues 79–131 (THRR…DDNT), 160–200 (GHEN…EEFE), 207–246 (DHTQ…DEWS), 253–300 (GHEG…GFNG), 335–374 (IHTH…WEVE), and 380–415 (AHGV…IWEV).

It belongs to the WD repeat CIA1 family. Interacts with NAR1.

Its subcellular location is the cytoplasm. It localises to the nucleus. Essential component of the cytosolic iron-sulfur (Fe/S) protein assembly machinery. Required for the maturation of extramitochondrial Fe/S proteins. This Lodderomyces elongisporus (strain ATCC 11503 / CBS 2605 / JCM 1781 / NBRC 1676 / NRRL YB-4239) (Yeast) protein is Probable cytosolic iron-sulfur protein assembly protein 1.